The following is a 295-amino-acid chain: Ethanolamine ammonia-lyase small subunit (295 aa).

Adenosylcob(III)alamin is bound by residues V207, E228, and C258.

The protein belongs to the EutC family. As to quaternary structure, the basic unit is a heterodimer which dimerizes to form tetramers. The heterotetramers trimerize; 6 large subunits form a core ring with 6 small subunits projecting outwards. The cofactor is adenosylcob(III)alamin.

It localises to the bacterial microcompartment. The enzyme catalyses ethanolamine = acetaldehyde + NH4(+). It functions in the pathway amine and polyamine degradation; ethanolamine degradation. Functionally, catalyzes the deamination of various vicinal amino-alcohols to oxo compounds. Allows this organism to utilize ethanolamine as the sole source of nitrogen and carbon in the presence of external vitamin B12. The protein is Ethanolamine ammonia-lyase small subunit of Escherichia coli (strain UTI89 / UPEC).